Consider the following 375-residue polypeptide: MQCALYDAGRCRSCQWITQSVNEQLSAKTADLHRLLAGLPVEQWCAPTGGPEQRFRNKAKMVVSGSVEKPLFGMLHRDGTPVDLCGCPLYPASFAPVFSALKPFIARAGLTPYNVARKRGELKYLLLTESQFDGGMMLRFVLRSETKLTQLRAALPWLRAQLPQLKVITANIQPVHMAIMEGETEIYLTDQQALAERFNDVPLWIRPQSFFQTNPTVASRLYATARDWVGQLPVRHMWDLFCGVGGFGLHCATPQMQLTGIEIAPEAIACAKQSAAELGLTRLHFQALDSTQFATAQGETPDLVLVNPPRRGIGKPLCDYLAQMAPRFIIYSSCNAQTMAQDIRHLPNYRIQRVQLFDMFPHTAHYEVLTLLCRL.

The [4Fe-4S] cluster site is built by Cys3, Cys11, Cys14, and Cys87. The S-adenosyl-L-methionine site is built by Gln212, Phe241, Glu262, and Asn307. Cys334 serves as the catalytic Nucleophile.

This sequence belongs to the class I-like SAM-binding methyltransferase superfamily. RNA M5U methyltransferase family. RlmC subfamily.

The enzyme catalyses uridine(747) in 23S rRNA + S-adenosyl-L-methionine = 5-methyluridine(747) in 23S rRNA + S-adenosyl-L-homocysteine + H(+). Its function is as follows. Catalyzes the formation of 5-methyl-uridine at position 747 (m5U747) in 23S rRNA. The sequence is that of 23S rRNA (uracil(747)-C(5))-methyltransferase RlmC from Salmonella agona (strain SL483).